A 1151-amino-acid polypeptide reads, in one-letter code: UDP-N-acetylglucosamine--peptide N-acetylglucosaminyltransferase (1151 aa).

TPR repeat units follow at residues 125–158 (LKKV…DPNN), 193–226 (AEAY…KPEF), 227–260 (IDAY…NPDL), 261–294 (YCVR…QPQF), 295–328 (AVAW…DPNF), 329–362 (LDAY…SGNH), 363–396 (AVVH…QPHF), 397–430 (PDAY…CPTH), 431–464 (ADSQ…YPEF), 465–498 (AAAH…APTF), 499–532 (ADAY…NPAF), and 533–566 (ADAH…KPDF). The TPR 13; truncated repeat unit spans residues 567–577 (PDAYCNLAHCH). The Nuclear localization signal signature appears at 591–607 (RKLVQIVEDQLCKKRLP). His-612 serves as the catalytic Proton acceptor. Residues Gln-954, Lys-957, 1010 to 1013 (VAAK), 1016 to 1019 (HVRR), 1034 to 1036 (GHT), and Asp-1040 contribute to the UDP site.

The protein belongs to the glycosyltransferase 41 family. O-GlcNAc transferase subfamily.

It is found in the nucleus. The protein localises to the cytoplasm. It localises to the perinuclear region. The catalysed reaction is L-seryl-[protein] + UDP-N-acetyl-alpha-D-glucosamine = 3-O-(N-acetyl-beta-D-glucosaminyl)-L-seryl-[protein] + UDP + H(+). It catalyses the reaction L-threonyl-[protein] + UDP-N-acetyl-alpha-D-glucosamine = 3-O-(N-acetyl-beta-D-glucosaminyl)-L-threonyl-[protein] + UDP + H(+). The protein operates within protein modification; protein glycosylation. Addition of nucleotide-activated sugars directly onto the polypeptide through O-glycosidic linkage with the hydroxyl of serine or threonine. Influences tap habituation in the mechanosensory neurons cell autonomously. This is UDP-N-acetylglucosamine--peptide N-acetylglucosaminyltransferase (ogt-1) from Caenorhabditis elegans.